The primary structure comprises 165 residues: Putative 1,2-phenylacetyl-CoA epoxidase, subunit D (165 aa).

Monomer.

It participates in aromatic compound metabolism; phenylacetate degradation. Its function is as follows. Possible component of 1,2-phenylacetyl-CoA epoxidase multicomponent enzyme system which catalyzes the reduction of phenylacetyl-CoA (PA-CoA) to form 1,2-epoxyphenylacetyl-CoA. The subunit D may have a function related to the maturation of the monooxygenase complex, rather than direct involvement in catalysis. PaaD could assist either in maturation of PaaE or PaaA. This is Putative 1,2-phenylacetyl-CoA epoxidase, subunit D (paaD) from Escherichia coli (strain K12).